Reading from the N-terminus, the 77-residue chain is uncharacterized protein (77 aa).

The chain crosses the membrane as a helical span at residues 13–33 (VPVIRLSVFLHFFFVFPFCLL).

It is found in the membrane. This is an uncharacterized protein from Saccharomyces cerevisiae (strain ATCC 204508 / S288c) (Baker's yeast).